A 393-amino-acid chain; its full sequence is NAD(P)H-quinone oxidoreductase subunit H, chloroplastic (393 aa).

This sequence belongs to the complex I 49 kDa subunit family. NDH is composed of at least 16 different subunits, 5 of which are encoded in the nucleus.

The protein resides in the plastid. Its subcellular location is the chloroplast thylakoid membrane. It carries out the reaction a plastoquinone + NADH + (n+1) H(+)(in) = a plastoquinol + NAD(+) + n H(+)(out). It catalyses the reaction a plastoquinone + NADPH + (n+1) H(+)(in) = a plastoquinol + NADP(+) + n H(+)(out). Functionally, NDH shuttles electrons from NAD(P)H:plastoquinone, via FMN and iron-sulfur (Fe-S) centers, to quinones in the photosynthetic chain and possibly in a chloroplast respiratory chain. The immediate electron acceptor for the enzyme in this species is believed to be plastoquinone. Couples the redox reaction to proton translocation, and thus conserves the redox energy in a proton gradient. The sequence is that of NAD(P)H-quinone oxidoreductase subunit H, chloroplastic from Gossypium hirsutum (Upland cotton).